The sequence spans 374 residues: Probable carboxylesterase 4, mitochondrial (374 aa).

Residues 1–52 (MLRRITCSSSLASPSLFLRFFRQLPRSYSSPTTIAVSGRNIRRLSTPTTLRC) constitute a mitochondrion transit peptide. The Involved in the stabilization of the negatively charged intermediate by the formation of the oxyanion hole signature appears at 135 to 137 (HGG). Catalysis depends on residues serine 219, aspartate 317, and histidine 349.

This sequence belongs to the 'GDXG' lipolytic enzyme family. Expressed in leaves, stems, flowers and siliques.

It is found in the mitochondrion. It carries out the reaction a carboxylic ester + H2O = an alcohol + a carboxylate + H(+). In terms of biological role, carboxylesterase acting on esters with varying acyl chain length. This Arabidopsis thaliana (Mouse-ear cress) protein is Probable carboxylesterase 4, mitochondrial (CXE4).